Consider the following 433-residue polypeptide: 23S rRNA (uracil(1939)-C(5))-methyltransferase RlmD (433 aa).

A TRAM domain is found at 1–53 (MPVAVIESLDHEGRGVAHVDGKVVFVEGALAGEQVEYTVYRQRPSYDLAEATR). [4Fe-4S] cluster is bound by residues cysteine 66, cysteine 72, cysteine 75, and cysteine 154. S-adenosyl-L-methionine-binding residues include glutamine 263, phenylalanine 292, asparagine 297, glutamate 313, asparagine 341, and aspartate 362. Catalysis depends on cysteine 389, which acts as the Nucleophile.

The protein belongs to the class I-like SAM-binding methyltransferase superfamily. RNA M5U methyltransferase family. RlmD subfamily.

The catalysed reaction is uridine(1939) in 23S rRNA + S-adenosyl-L-methionine = 5-methyluridine(1939) in 23S rRNA + S-adenosyl-L-homocysteine + H(+). Functionally, catalyzes the formation of 5-methyl-uridine at position 1939 (m5U1939) in 23S rRNA. The protein is 23S rRNA (uracil(1939)-C(5))-methyltransferase RlmD of Aromatoleum aromaticum (strain DSM 19018 / LMG 30748 / EbN1) (Azoarcus sp. (strain EbN1)).